Here is a 238-residue protein sequence, read N- to C-terminus: 2,3,4,5-tetrahydropyridine-2,6-dicarboxylate N-acetyltransferase (238 aa).

This sequence belongs to the transferase hexapeptide repeat family. DapH subfamily.

The enzyme catalyses (S)-2,3,4,5-tetrahydrodipicolinate + acetyl-CoA + H2O = L-2-acetamido-6-oxoheptanedioate + CoA. It functions in the pathway amino-acid biosynthesis; L-lysine biosynthesis via DAP pathway; LL-2,6-diaminopimelate from (S)-tetrahydrodipicolinate (acetylase route): step 1/3. Its function is as follows. Catalyzes the transfer of an acetyl group from acetyl-CoA to tetrahydrodipicolinate. The polypeptide is 2,3,4,5-tetrahydropyridine-2,6-dicarboxylate N-acetyltransferase (Pseudothermotoga lettingae (strain ATCC BAA-301 / DSM 14385 / NBRC 107922 / TMO) (Thermotoga lettingae)).